A 510-amino-acid polypeptide reads, in one-letter code: Light-independent protochlorophyllide reductase subunit B (510 aa).

[4Fe-4S] cluster is bound at residue aspartate 36. Aspartate 297 (proton donor) is an active-site residue. Residue glycine 432–methionine 433 coordinates substrate.

It belongs to the ChlB/BchB/BchZ family. In terms of assembly, protochlorophyllide reductase is composed of three subunits; ChlL, ChlN and ChlB. Forms a heterotetramer of two ChlB and two ChlN subunits. [4Fe-4S] cluster is required as a cofactor.

The protein resides in the plastid. The protein localises to the chloroplast. The enzyme catalyses chlorophyllide a + oxidized 2[4Fe-4S]-[ferredoxin] + 2 ADP + 2 phosphate = protochlorophyllide a + reduced 2[4Fe-4S]-[ferredoxin] + 2 ATP + 2 H2O. Its pathway is porphyrin-containing compound metabolism; chlorophyll biosynthesis (light-independent). Its function is as follows. Component of the dark-operative protochlorophyllide reductase (DPOR) that uses Mg-ATP and reduced ferredoxin to reduce ring D of protochlorophyllide (Pchlide) to form chlorophyllide a (Chlide). This reaction is light-independent. The NB-protein (ChlN-ChlB) is the catalytic component of the complex. In Pinus thunbergii (Japanese black pine), this protein is Light-independent protochlorophyllide reductase subunit B.